The following is a 561-amino-acid chain: Arginine--tRNA ligase (561 aa).

A 'HIGH' region motif is present at residues 129 to 139; it reads ANPTGPLHVGH.

This sequence belongs to the class-I aminoacyl-tRNA synthetase family. In terms of assembly, monomer.

It localises to the cytoplasm. The enzyme catalyses tRNA(Arg) + L-arginine + ATP = L-arginyl-tRNA(Arg) + AMP + diphosphate. The sequence is that of Arginine--tRNA ligase from Polaromonas sp. (strain JS666 / ATCC BAA-500).